Reading from the N-terminus, the 417-residue chain is Carboxypeptidase A2 (417 aa).

The first 16 residues, 1-16 (MRLTPLLVALFGYIYC), serve as a signal peptide directing secretion. Residues 17–112 (QETFVGDQVL…EMLFNQQRER (96 aa)) constitute a propeptide, activation peptide. The 293-residue stretch at 120–412 (AYHTLEEIYQ…LGLKTIMEHV (293 aa)) folds into the Peptidase M14 domain. 2 residues coordinate Zn(2+): H177 and E180. Residues 177–180 (HARE), R235, and 252–253 (NR) each bind substrate. C246 and C269 form a disulfide bridge. H304 is a binding site for Zn(2+). A substrate-binding site is contributed by 305 to 306 (SY). C318 and C352 are oxidised to a cystine. A substrate-binding site is contributed by Y356. E378 acts as the Proton donor/acceptor in catalysis.

Belongs to the peptidase M14 family. It depends on Zn(2+) as a cofactor.

The protein localises to the secreted. It carries out the reaction Similar to that of carboxypeptidase A (EC 3.4.17.1), but with a preference for bulkier C-terminal residues.. Functionally, carboxypeptidase that catalyzes the release of a C-terminal amino acid, with a preference for large aromatic C-terminal residues. The sequence is that of Carboxypeptidase A2 (Cpa2) from Mus musculus (Mouse).